The chain runs to 393 residues: Acetate kinase (393 aa).

A Mg(2+)-binding site is contributed by Asn10. Lys17 is an ATP binding site. Arg89 serves as a coordination point for substrate. Asp146 functions as the Proton donor/acceptor in the catalytic mechanism. ATP contacts are provided by residues 204–208 (HLGNG), 278–280 (DMR), and 323–327 (GVGEN). Glu376 is a Mg(2+) binding site.

This sequence belongs to the acetokinase family. In terms of assembly, homodimer. Requires Mg(2+) as cofactor. The cofactor is Mn(2+).

Its subcellular location is the cytoplasm. It carries out the reaction acetate + ATP = acetyl phosphate + ADP. It participates in metabolic intermediate biosynthesis; acetyl-CoA biosynthesis; acetyl-CoA from acetate: step 1/2. Catalyzes the formation of acetyl phosphate from acetate and ATP. Can also catalyze the reverse reaction. The polypeptide is Acetate kinase (Mycoplasma genitalium (strain ATCC 33530 / DSM 19775 / NCTC 10195 / G37) (Mycoplasmoides genitalium)).